The following is a 950-amino-acid chain: Leucine--tRNA ligase 2 (950 aa).

Positions 47–57 match the 'HIGH' region motif; the sequence is PYPNSPFHLGH. The 'KMSKS' region signature appears at 631-635; the sequence is KMSKS. K634 serves as a coordination point for ATP.

This sequence belongs to the class-I aminoacyl-tRNA synthetase family.

The protein resides in the cytoplasm. The enzyme catalyses tRNA(Leu) + L-leucine + ATP = L-leucyl-tRNA(Leu) + AMP + diphosphate. In Metallosphaera sedula (strain ATCC 51363 / DSM 5348 / JCM 9185 / NBRC 15509 / TH2), this protein is Leucine--tRNA ligase 2.